We begin with the raw amino-acid sequence, 212 residues long: MAGGGGLKFVEMDVRNDDAYKLAKEWFDEVVFSVKFQDSIDKELLREAERNYGLVAILLVNPRLSIVKEAVQRFKQNYLIYVESSDLRTIRYSIERGVDAIISPWVGRKDPGIDHTLARMMAKKGVALGFSLRPLLEASPYDKANILKFMRKAWQLTNKYKVKRFITSSANEKWHIRWPRDLATLGIIIGMEVQQAKAALSTYPDIILKRLK.

This sequence belongs to the eukaryotic/archaeal RNase P protein component 3 family. As to quaternary structure, consists of a catalytic RNA component and at least 4-5 protein subunits.

Its subcellular location is the cytoplasm. The catalysed reaction is Endonucleolytic cleavage of RNA, removing 5'-extranucleotides from tRNA precursor.. In terms of biological role, part of ribonuclease P, a protein complex that generates mature tRNA molecules by cleaving their 5'-ends. The sequence is that of Ribonuclease P protein component 3 from Pyrococcus abyssi (strain GE5 / Orsay).